Consider the following 1379-residue polypeptide: MKRVCTLPLWLWLGIVSEADLVSSYSMTPPTLSITEEEHIINAKDTLTITCRGQHPLEWSWPGARWTPVEGRRRWNSQPQQRPVGAGNPEEDCEGTGTKPYCKVLVLTESQANDTGYYHCYYKYIDAKIEGTTAVSAYIFVRDFEQPFINKPETLLISKKENTWVPCLVSIPDLNVTLISQNSLIHPDRKTIFWDNKKGMQVPTQLIRDSLFVQCETVIDNKVFKSNFFIIHIAGIELYDIQLYPKKAMELLVGEKLVLNCTVWAEFNSGVRFQWTYPGKQMQRAVIESERRSLQTHTELSSILTLHNVSQQDLGRYTCTATNGAQMLEESTDVIVHEKPFINVEWRKGPVIEATAGDEAVKLPVKVVAYPQPDFQWYKAGKLIPKQSQSSMQIKDVAEHHAGTYTLVLRNRLVGLEKRISLQLIVNVPPRIHEKETSSPSIYSRRSPQALTCTVYGIPAPEVIQWQWRPWMPCRMFSRRSLNSRHRAARRHQRDRMPECKDWKDVSRQDAVNPIESIDTWVEFVEGRNKTVSKLAIQEANVSAMYKCIASNKVGRDERLIYFYVTTIPDGFEIESQPSEEPIEGQDLQLSCNADNYTYENLQWYRLNLSKLHDEEGNPLVLDCKNVHHYATKMQGELRFQPDSNDATLLLTIPNISLGEEGDYVCEVQNRKTREKHCHKKYISVQALEIPRLKQNLTDIWVNVSDSIEMRCKVDGNHVPDISWYKDEKLVEEVSGIDLADFNQRLSIQRVREEDAGLYLCSVCNAKGCVNSSASVSVEGSDDKTNVEIVILIGTGVIAVFFWILLIIIFCNIKRPAHADIKTGYLSIIMDPGEVPLEEQCAYLPYDSSKWEFPRDRLRLGKVLGHGAFGKVVEASAFGINKSNSCETVAAKMLKEGATASEQKALMSELKILIHIGNHLNVVNLLGACTKPNGPLMVIVEFCKYGNLSNYLRTKREGFSPYREKSPRLRIQVQSIVEAVRADRRSRSGTSDSAIFNRFLMHKSQTVQPIQEVDDLWQSPLTMEDLICYSFQVARGMEFLASRKCIHRDLAARNILLSENNVVKICDFGLARDIYKDPDYVRKGSARLPLKWMAPESIFDKVYTTQSDVWSFGVLLWEIFSLGASPYPGVQINEEFCQRFKDGTRMRAPEYTTAEIYRIMLSCWHGDPKERPTFSDLVEILGNLLQENVQQEGKDYIPLNDSHSSEDDGFSQVPSSAQQNSDEEDFDMRIRCHSLAARYYNCVSFPGCLTGGNQIRCSSRIKTFEEFPMTHTMYKAHPDNQTDSGMVLASEEFERIENRHRKEGGFSSKGPNRTAELSAEQSDLRGRCRPSYGSQVGGQTFYNSEYGELSEHSEDRSCTPPAEGASPPALHASFFSEQY.

Positions 1–19 (MKRVCTLPLWLWLGIVSEA) are cleaved as a signal peptide. The Extracellular segment spans residues 20-788 (DLVSSYSMTP…EGSDDKTNVE (769 aa)). 7 consecutive Ig-like C2-type domains span residues 30–136 (PTLS…TAVS), 160–222 (KENT…IDNK), 240–335 (DIQL…TDVI), 340–421 (PFIN…KRIS), 430–566 (PRIH…FYVT), 569–684 (PDGF…KYIS), and 691–777 (PRLK…ASVS). Intrachain disulfides connect Cys-51–Cys-120 and Cys-167–Cys-215. A disordered region spans residues 73 to 93 (RRWNSQPQQRPVGAGNPEEDC). N-linked (GlcNAc...) asparagine glycans are attached at residues Asn-113, Asn-175, Asn-260, and Asn-308. Cys-261 and Cys-319 are joined by a disulfide. Cystine bridges form between Cys-453–Cys-548, Cys-474–Cys-500, and Cys-592–Cys-666. Asn-529, Asn-541, Asn-596, Asn-608, Asn-655, Asn-696, and Asn-703 each carry an N-linked (GlcNAc...) asparagine glycan. Residues Cys-712 and Cys-761 are joined by a disulfide bond. A glycan (N-linked (GlcNAc...) asparagine) is linked at Asn-771. A helical membrane pass occupies residues 789–809 (IVILIGTGVIAVFFWILLIII). Topologically, residues 810 to 1379 (FCNIKRPAHA…LHASFFSEQY (570 aa)) are cytoplasmic. The 328-residue stretch at 858–1185 (LRLGKVLGHG…DLVEILGNLL (328 aa)) folds into the Protein kinase domain. Residues 864-872 (LGHGAFGKV) and Lys-892 each bind ATP. The Proton acceptor role is filled by Asp-1049. Phosphotyrosine; by autocatalysis is present on residues Tyr-1075 and Tyr-1080. The segment at 1196–1224 (YIPLNDSHSSEDDGFSQVPSSAQQNSDEE) is disordered. A phosphotyrosine; by autocatalysis mark is found at Tyr-1239, Tyr-1240, Tyr-1274, Tyr-1342, and Tyr-1346. Residues 1299-1379 (RHRKEGGFSS…LHASFFSEQY (81 aa)) form a disordered region. Positions 1332-1343 (YGSQVGGQTFYN) are enriched in polar residues.

This sequence belongs to the protein kinase superfamily. Tyr protein kinase family. CSF-1/PDGF receptor subfamily. Interacts with VEGFC and VEGFD. Monomer in the absence of bound VEGFC or VEGFD. Homodimer in the presence of bound VEGFC or VEGFD. Post-translationally, autophosphorylated on tyrosine residues upon ligand binding. Autophosphorylation occurs in trans, i.e. one subunit of the dimeric receptor phosphorylates tyrosine residues on the other subunit.

It localises to the cell membrane. The protein localises to the cytoplasm. Its subcellular location is the nucleus. It carries out the reaction L-tyrosyl-[protein] + ATP = O-phospho-L-tyrosyl-[protein] + ADP + H(+). Its activity is regulated as follows. Present in an inactive conformation in the absence of bound ligand. Binding of VEGFC or VEGFD leads to dimerization and activation by autophosphorylation on tyrosine residues. Functionally, tyrosine-protein kinase that acts as a cell-surface receptor for VEGFC and VEGFD, and plays an essential role in lymphangiogenesis and in the development of the vascular network and the cardiovascular system during embryonic development. Promotes proliferation, survival and migration of endothelial cells, and regulates angiogenic sprouting. Mediates activation of the MAPK1/ERK2, MAPK3/ERK1 signaling pathway, of MAPK8 and the JUN signaling pathway, and of the AKT1 signaling pathway. This chain is Vascular endothelial growth factor receptor 3 (FLT4), found in Coturnix coturnix (Common quail).